The chain runs to 108 residues: Ig kappa chain V region BS-5 (108 aa).

A framework-1 region spans residues 1 to 23 (DVVMTQTPASVSEPVGGTVTIKC). 2 disulfides stabilise this stretch: Cys23-Cys88 and Cys80-Gly108. The tract at residues 24-34 (QASQSIYSNLA) is complementarity-determining-1. The segment at 35–49 (WYQZKPGQPPKLLIY) is framework-2. Residues 50–56 (KASTLES) form a complementarity-determining-2 region. The segment at 57-88 (GVPSRFKGSGSGTDFTLTISDLECADAATYFC) is framework-3. Residues 89 to 97 (QGSBYTGTV) form a complementarity-determining-3 region. The segment at 98–107 (FGGGTEVVVK) is framework-4.

This chain is Ig kappa chain V region BS-5, found in Oryctolagus cuniculus (Rabbit).